Consider the following 305-residue polypeptide: Cysteine synthase (305 aa).

The residue at position 45 (Lys-45) is an N6-(pyridoxal phosphate)lysine. Pyridoxal 5'-phosphate-binding positions include Asn-75, 179 to 183 (GSGGT), and Ser-266.

The protein belongs to the cysteine synthase/cystathionine beta-synthase family. Homodimer. Pyridoxal 5'-phosphate is required as a cofactor.

It carries out the reaction O-acetyl-L-serine + hydrogen sulfide = L-cysteine + acetate. It participates in amino-acid biosynthesis; L-cysteine biosynthesis; L-cysteine from L-serine: step 2/2. This Helicobacter pylori (strain J99 / ATCC 700824) (Campylobacter pylori J99) protein is Cysteine synthase (cysM).